The primary structure comprises 452 residues: Selenide, water dikinase 2 (452 aa).

A2 carries the N-acetylalanine modification. At S49 the chain carries Phosphoserine. Residue U63 is part of the active site. A non-standard amino acid (selenocysteine) is located at residue U63. K66 contributes to the ATP binding site. The tract at residues 86 to 111 (PPLTSGLVGGQEETVQEGGLSTRPGP) is disordered. Over residues 95-105 (GQEETVQEGGL) the composition is skewed to low complexity. Residues 121–123 (GMD), D141, D164, and 215–218 (GGQT) each bind ATP. D123 contacts Mg(2+). D164 is a binding site for Mg(2+). D319 provides a ligand contact to Mg(2+).

The protein belongs to the selenophosphate synthase 1 family. Class I subfamily. In terms of assembly, homodimer. The cofactor is Mg(2+). Post-translationally, truncated SEPHS2 proteins produced by failed UGA/Sec decoding are ubiquitinated by the CRL2(KLHDC3) complex, which recognizes the glycine (Gly) at the C-terminus of truncated SEPHS2 proteins.

The catalysed reaction is hydrogenselenide + ATP + H2O = selenophosphate + AMP + phosphate + 2 H(+). Its function is as follows. Synthesizes selenophosphate from selenide and ATP. In Mus musculus (Mouse), this protein is Selenide, water dikinase 2 (Sephs2).